The sequence spans 357 residues: Uroporphyrinogen decarboxylase (357 aa).

Substrate is bound by residues 27-31 (RQAGR), D77, Y154, S209, and H330.

Belongs to the uroporphyrinogen decarboxylase family. Homodimer.

It is found in the cytoplasm. It catalyses the reaction uroporphyrinogen III + 4 H(+) = coproporphyrinogen III + 4 CO2. Its pathway is porphyrin-containing compound metabolism; protoporphyrin-IX biosynthesis; coproporphyrinogen-III from 5-aminolevulinate: step 4/4. Catalyzes the decarboxylation of four acetate groups of uroporphyrinogen-III to yield coproporphyrinogen-III. The chain is Uroporphyrinogen decarboxylase from Acinetobacter baumannii (strain ACICU).